Reading from the N-terminus, the 176-residue chain is NAD(P)H-quinone oxidoreductase subunit I, chloroplastic (176 aa).

2 4Fe-4S ferredoxin-type domains span residues 55-84 (GRIH…VNWE) and 95-124 (QTYS…MTEE). [4Fe-4S] cluster is bound by residues Cys-64, Cys-67, Cys-70, Cys-74, Cys-104, Cys-107, Cys-110, and Cys-114.

This sequence belongs to the complex I 23 kDa subunit family. As to quaternary structure, NDH is composed of at least 16 different subunits, 5 of which are encoded in the nucleus. The cofactor is [4Fe-4S] cluster.

It localises to the plastid. Its subcellular location is the chloroplast thylakoid membrane. It catalyses the reaction a plastoquinone + NADH + (n+1) H(+)(in) = a plastoquinol + NAD(+) + n H(+)(out). It carries out the reaction a plastoquinone + NADPH + (n+1) H(+)(in) = a plastoquinol + NADP(+) + n H(+)(out). In terms of biological role, NDH shuttles electrons from NAD(P)H:plastoquinone, via FMN and iron-sulfur (Fe-S) centers, to quinones in the photosynthetic chain and possibly in a chloroplast respiratory chain. The immediate electron acceptor for the enzyme in this species is believed to be plastoquinone. Couples the redox reaction to proton translocation, and thus conserves the redox energy in a proton gradient. In Mesostigma viride (Green alga), this protein is NAD(P)H-quinone oxidoreductase subunit I, chloroplastic.